A 241-amino-acid polypeptide reads, in one-letter code: MORN repeat-containing protein 3 (241 aa).

An interaction with MDM2 region spans residues 6–35; sequence CPQKSEPLWKEWDQKAQKNGLRHQVFAVNG. MORN repeat units lie at residues 38–60, 62–84, 91–113, 114–136, 137–159, 160–182, and 184–205; these read YVGE…KNGA, YEGD…DQET, YSGW…PKEY, YEGD…NGDI, YEGQ…NGNR, YEGN…DHGQ, and FEGF…GRDE. The interaction with SIRT1 stretch occupies residues 76-100; it reads TLSLPDQETGKYKRAYSGWWKGDKK. The interaction with TP53 stretch occupies residues 206-240; sequence APQPTQFPIPEVKILDPDGVLEEALAMFKKTKEEG.

As to quaternary structure, interacts with MEIG1. Interacts with TP53, MDM2 and SIRT1; the interactions mediate post-transcriptional modifications of TP53 by MDM2 and SIRT1.

It is found in the cytoplasmic vesicle. It localises to the secretory vesicle. The protein localises to the acrosome. Its function is as follows. Assembles a suppression complex (suppresome) by tethering SIRT1 and MDM2 to regulate composite modifications of p53/TP53. Confers both deacetylation-mediated functional inactivation, by SIRT1, and ubiquitination-dependent degradation, by MDM2, of p53/TP53, promoting a proliferative and cell survival behaviors. May play a role in the regulation of spermatogenesis. The protein is MORN repeat-containing protein 3 (MORN3) of Bos taurus (Bovine).